We begin with the raw amino-acid sequence, 396 residues long: Putative 3-phosphoinositide-dependent protein kinase 2 (396 aa).

The segment covering 1–11 has biased composition (polar residues); sequence MVRTQTESSTP. Positions 1–53 are disordered; it reads MVRTQTESSTPPGIPGGSRQGPAMDGTAAEPRPGAGSLQHAQPPPQPRKKRPE. The region spanning 55–315 is the Protein kinase domain; sequence FKFGKILGEG…YGPLKAHPFF (261 aa). ATP is bound by residues 65–67 and Lys-84; that span reads SFS. Residues 86–130 are PIF-pocket; that stretch reads LEKRHIIKENKVPYVTRERDVMSRLDHPFFVKLYFTFQDDEKLYF. ATP contacts are provided by residues 133–135 and Glu-139; that span reads SYA. Asp-178 (proton acceptor) is an active-site residue. ATP-binding residues include Glu-182 and Asp-196.

Belongs to the protein kinase superfamily. AGC Ser/Thr protein kinase family. PDPK1 subfamily. In terms of processing, phosphorylated on tyrosine and serine/threonine.

The protein localises to the cytoplasm. It is found in the membrane. The enzyme catalyses L-seryl-[protein] + ATP = O-phospho-L-seryl-[protein] + ADP + H(+). It catalyses the reaction L-threonyl-[protein] + ATP = O-phospho-L-threonyl-[protein] + ADP + H(+). Phosphorylates and activates not only PKB/AKT, but also PKA, PKC-zeta, RPS6KA1 and RPS6KB1. May play a general role in signaling processes and in development. This is Putative 3-phosphoinositide-dependent protein kinase 2 from Homo sapiens (Human).